A 60-amino-acid polypeptide reads, in one-letter code: Ixodegrin-like peptide (60 aa).

Positions 1-21 are cleaved as a signal peptide; the sequence is MNAAFIAALLILGALTLDAMA. The Cell attachment site signature appears at 49-51; that stretch reads RGD.

The protein belongs to the ixodegrin family. Contains 3 disulfide bonds. Expressed in salivary glands.

The protein localises to the secreted. Tick salivary platelet aggregation inhibitor that plays an important part in the anti-hemostatic strategy of ticks. Inhibits platelet aggregation induced by ADP, thrombin and thromboxane A2 (TXA2). Blocks platelet adhesion to soluble collagen (most probably through the binding to alpha-2/beta-1 integrin (ITGA2/ITGB1)) and binds to purified glycoprotein IIb/IIIa (ITGA2B/ITGB3) in a dose-dependent manner. In vivo, reduces thrombus weight effectively in a rat arteriovenous shunt model and inhibits thrombosis in a carrageenan-induced mouse tail thrombosis model. The protein is Ixodegrin-like peptide of Ixodes scapularis (Black-legged tick).